Here is a 203-residue protein sequence, read N- to C-terminus: Proteasome subunit beta 2 (203 aa).

A propeptide spans 1 to 9 (removed in mature form; by autocatalysis); sequence MGEEVQIGA. Threonine 10 serves as the catalytic Nucleophile.

The protein belongs to the peptidase T1B family. The 20S proteasome core is composed of 14 alpha and 14 beta subunits that assemble into four stacked heptameric rings, resulting in a barrel-shaped structure. The two inner rings, each composed of seven catalytic beta subunits, are sandwiched by two outer rings, each composed of seven alpha subunits. The catalytic chamber with the active sites is on the inside of the barrel. Has a gated structure, the ends of the cylinder being occluded by the N-termini of the alpha-subunits. Is capped at one or both ends by the proteasome regulatory ATPase, PAN.

Its subcellular location is the cytoplasm. It carries out the reaction Cleavage of peptide bonds with very broad specificity.. Its activity is regulated as follows. The formation of the proteasomal ATPase PAN-20S proteasome complex, via the docking of the C-termini of PAN into the intersubunit pockets in the alpha-rings, triggers opening of the gate for substrate entry. Interconversion between the open-gate and close-gate conformations leads to a dynamic regulation of the 20S proteasome proteolysis activity. Its function is as follows. Component of the proteasome core, a large protease complex with broad specificity involved in protein degradation. The polypeptide is Proteasome subunit beta 2 (Pyrobaculum aerophilum (strain ATCC 51768 / DSM 7523 / JCM 9630 / CIP 104966 / NBRC 100827 / IM2)).